We begin with the raw amino-acid sequence, 1112 residues long: Rho GTPase-activating protein 7 (1112 aa).

One can recognise an SAM domain in the interval 37-104 (LAEIEAKEAC…LNKCAVMKLE (68 aa)). Ser-112, Ser-115, and Ser-155 each carry phosphoserine. Disordered regions lie at residues 146-203 (SPKQ…APAR), 318-350 (RSIS…RTRS), 405-459 (PKAL…VSSR), and 512-574 (SDEG…GVGA). A compositionally biased stretch (polar residues) spans 183–193 (VHSTGSLTTHA). The focal adhesion-targeting (FAT) stretch occupies residues 296-468 (QLNCVEISAL…RLSIYDNVPG (173 aa)). 2 stretches are compositionally biased toward low complexity: residues 320–348 (ISSS…VTRT) and 409–423 (SNGS…SSVN). Ser-343 carries the post-translational modification Phosphoserine. Basic and acidic residues predominate over residues 437–446 (LRRENSSPKE). Over residues 520 to 532 (ALDSVSPCPSSPK) the composition is skewed to polar residues. The span at 534–544 (IHLDVDNDRAT) shows a compositional bias: basic and acidic residues. Over residues 547–556 (DLDSTGNSLN) the composition is skewed to polar residues. A polybasic cluster (PBR) region spans residues 635–657 (KHGFSWAVPKFMKRIKVPDYKDR). Positions 662–868 (VPLTVNVQRT…HMIAECKKLF (207 aa)) constitute a Rho-GAP domain. One can recognise an START domain in the interval 898-1105 (CNDDSADYQH…RDSFSHQNTE (208 aa)).

Interacts with EF1A1, facilitates EF1A1 distribution to the membrane periphery and ruffles upon growth factor stimulation and suppresses cell migration. Interacts with tensin TNS1 (via N-terminus); the interaction is decreased by phosphorylation of TNS1. Interacts with TNS3 and PTEN; in resting cells, interacts with TNS3 (via C2 tensin-type domain) but, following growth factor stimulation, TNS3 and PTEN are phosphorylated which leads to weakened interaction with TNS3 and enhanced interaction with PTEN. Interacts (via C-terminus) with tensin TNS4 (via SH2 domain); the interaction is independent of tyrosine phosphorylation of DLC1.

The protein localises to the cytoplasm. It localises to the cell junction. The protein resides in the focal adhesion. It is found in the membrane. Functions as a GTPase-activating protein for the small GTPases RHOA, RHOB, RHOC and CDC42, terminating their downstream signaling. This induces morphological changes and detachment through cytoskeletal reorganization, playing a critical role in biological processes such as cell migration and proliferation. Also functions in vivo as an activator of the phospholipase PLCD1. Active DLC1 increases cell migration velocity but reduces directionality. Required for growth factor-induced epithelial cell migration; in resting cells, interacts with TNS3 while PTEN interacts with the p85 regulatory subunit of the PI3K kinase complex but growth factor stimulation induces phosphorylation of TNS3 and PTEN, causing them to change their binding preference so that PTEN interacts with DLC1 and TNS3 interacts with p85. The PTEN-DLC1 complex translocates to the posterior of migrating cells to activate RHOA while the TNS3-p85 complex translocates to the leading edge of migrating cells to promote RAC1 activation. This chain is Rho GTPase-activating protein 7 (DLC1), found in Bos taurus (Bovine).